The following is a 334-amino-acid chain: MPLNLRHRHFLRLMDFTPTEIQFLLDLSANLKKAKYTGTEQPRLKGKNIALIFEKTSTRTRCSFEVAAYDQGANVTYIGPSGSQIGHKESMKDTARVLGRMYDGIQYRGYGQELVEILAQYSGVPVWNGLTDDFHPTQILADFLTMLEHGEGKRLNQMKMAYLGDARNNMGNSFVEGAALMGMDLRLVAPKAYWPEQKLLDEVAEMAKKTGAKITCTENVEEGVKGVDFLYTDIWVSMGEPEEAWEQRINLMKPYQVNKALLEKTGNPKVKFMHCLPAFHDENTTVGKEMAQKYGMNGLEVTDEVFESDASIVFDEAENRMHTIKAVMVATLGQ.

Carbamoyl phosphate is bound by residues 57 to 60 (STRT), Q84, R108, and 135 to 138 (HPTQ). Residues N169, D233, and 237–238 (SM) each bind L-ornithine. Residues 275–276 (CL) and R320 contribute to the carbamoyl phosphate site.

It belongs to the aspartate/ornithine carbamoyltransferase superfamily. OTCase family.

The protein localises to the cytoplasm. It carries out the reaction carbamoyl phosphate + L-ornithine = L-citrulline + phosphate + H(+). Its pathway is amino-acid biosynthesis; L-arginine biosynthesis; L-arginine from L-ornithine and carbamoyl phosphate: step 1/3. Functionally, reversibly catalyzes the transfer of the carbamoyl group from carbamoyl phosphate (CP) to the N(epsilon) atom of ornithine (ORN) to produce L-citrulline. The sequence is that of Ornithine carbamoyltransferase (argF) from Pasteurella multocida (strain Pm70).